The primary structure comprises 1080 residues: DNA-directed RNA polymerase subunit beta (1080 aa).

It belongs to the RNA polymerase beta chain family. As to quaternary structure, in plastids the minimal PEP RNA polymerase catalytic core is composed of four subunits: alpha, beta, beta', and beta''. When a (nuclear-encoded) sigma factor is associated with the core the holoenzyme is formed, which can initiate transcription.

It is found in the plastid. It localises to the chloroplast. It carries out the reaction RNA(n) + a ribonucleoside 5'-triphosphate = RNA(n+1) + diphosphate. In terms of biological role, DNA-dependent RNA polymerase catalyzes the transcription of DNA into RNA using the four ribonucleoside triphosphates as substrates. This is DNA-directed RNA polymerase subunit beta from Mesostigma viride (Green alga).